Consider the following 66-residue polypeptide: MAKGKDVRVKVILECTGCVRKSVNKGSRGVSRYITQKNRHNTPSRLELRKFCPYCYKHTIHGEIKK.

As to quaternary structure, component of the chloroplast large ribosomal subunit (LSU). Mature 70S chloroplast ribosomes of higher plants consist of a small (30S) and a large (50S) subunit. The 30S small subunit contains 1 molecule of ribosomal RNA (16S rRNA) and 24 different proteins. The 50S large subunit contains 3 rRNA molecules (23S, 5S and 4.5S rRNA) and 33 different proteins.

It localises to the plastid. The protein resides in the chloroplast. In terms of biological role, component of the chloroplast ribosome (chloro-ribosome), a dedicated translation machinery responsible for the synthesis of chloroplast genome-encoded proteins, including proteins of the transcription and translation machinery and components of the photosynthetic apparatus. The protein is Large ribosomal subunit protein bL33c (rpl33) of Spinacia oleracea (Spinach).